The following is a 289-amino-acid chain: Iron-sulfur cluster carrier protein (289 aa).

Over residues 1–18 (MAEECSGNCDSCGSSSDC) the composition is skewed to low complexity. The segment at 1–20 (MAEECSGNCDSCGSSSDCSD) is disordered. 48 to 55 (GKGGVGKS) is a binding site for ATP.

The protein belongs to the Mrp/NBP35 ATP-binding proteins family. Homodimer.

In terms of biological role, binds and transfers iron-sulfur (Fe-S) clusters to target apoproteins. Can hydrolyze ATP. This is Iron-sulfur cluster carrier protein from Methanococcus maripaludis (strain DSM 14266 / JCM 13030 / NBRC 101832 / S2 / LL).